A 259-amino-acid polypeptide reads, in one-letter code: Global transcriptional regulator CodY (259 aa).

The tract at residues 1–155 (MELLAKTRKL…SSTVVGMEIL (155 aa)) is GAF domain. A DNA-binding region (H-T-H motif) is located at residues 203 to 222 (ASKIADRVGITRSVIVNALR). Position 215 is a phosphoserine (Ser-215).

It belongs to the CodY family.

Its subcellular location is the cytoplasm. Functionally, DNA-binding global transcriptional regulator which is involved in the adaptive response to starvation and acts by directly or indirectly controlling the expression of numerous genes in response to nutrient availability. During rapid exponential growth, CodY is highly active and represses genes whose products allow adaptation to nutrient depletion. The protein is Global transcriptional regulator CodY of Bacillus cereus (strain ATCC 10987 / NRS 248).